Here is a 216-residue protein sequence, read N- to C-terminus: Ras-related protein RABE1c (216 aa).

Gly22–Ser29 contacts GTP. The short motif at Phe44–Phe52 is the Effector region element. GTP is bound by residues Asp70–Gln74, Asn128–Asp131, and Ser159–Ala160. S-geranylgeranyl cysteine attachment occurs at residues Cys213 and Cys214.

It belongs to the small GTPase superfamily. Rab family. As to quaternary structure, interacts with PI5K2.

It localises to the golgi apparatus membrane. The protein resides in the cell membrane. Functionally, involved in membrane trafficking from the Golgi to the plasma membrane. The sequence is that of Ras-related protein RABE1c (RABE1C) from Arabidopsis thaliana (Mouse-ear cress).